Here is a 730-residue protein sequence, read N- to C-terminus: Meiotically up-regulated gene 70 protein (730 aa).

Residues 1–27 (MTVGTLSVVSSTASDTASHVSDTRKRQ) are disordered. Low complexity predominate over residues 7–20 (SVVSSTASDTASHV). CBS domains follow at residues 69-127 (ALDP…LNAR), 135-200 (MSTS…RIAR), 263-319 (SSEE…GLDP), and 328-385 (MTPH…PEEE). The next 2 membrane-spanning stretches (helical) occupy residues 290-310 (AVLV…DVVL) and 358-378 (VVDE…ATAI). Residues 420–517 (ENYDVNPPLP…ENGSNSFAAS (98 aa)) form a disordered region. 2 stretches are compositionally biased toward polar residues: residues 458–470 (AWQN…NNKP) and 480–515 (YNFS…NSFA). The PB1 domain maps to 572–649 (PSQFTIKYRS…ARRRGLPRLE (78 aa)). A helical transmembrane segment spans residues 706-726 (PIYIGIVSSSIVILAVSMWYL).

The protein localises to the cytoplasm. The protein resides in the nucleus membrane. Functionally, has a role in meiosis. The chain is Meiotically up-regulated gene 70 protein (mug70) from Schizosaccharomyces pombe (strain 972 / ATCC 24843) (Fission yeast).